Consider the following 104-residue polypeptide: Large ribosomal subunit protein uL24 (104 aa).

The protein belongs to the universal ribosomal protein uL24 family. As to quaternary structure, part of the 50S ribosomal subunit.

In terms of biological role, one of two assembly initiator proteins, it binds directly to the 5'-end of the 23S rRNA, where it nucleates assembly of the 50S subunit. Its function is as follows. One of the proteins that surrounds the polypeptide exit tunnel on the outside of the subunit. In Pectobacterium atrosepticum (strain SCRI 1043 / ATCC BAA-672) (Erwinia carotovora subsp. atroseptica), this protein is Large ribosomal subunit protein uL24.